The following is a 443-amino-acid chain: ATP-dependent protease ATPase subunit HslU (443 aa).

Residues I19, 61 to 66 (GVGKTE), D256, E321, and R393 contribute to the ATP site.

Belongs to the ClpX chaperone family. HslU subfamily. In terms of assembly, a double ring-shaped homohexamer of HslV is capped on each side by a ring-shaped HslU homohexamer. The assembly of the HslU/HslV complex is dependent on binding of ATP.

It localises to the cytoplasm. In terms of biological role, ATPase subunit of a proteasome-like degradation complex; this subunit has chaperone activity. The binding of ATP and its subsequent hydrolysis by HslU are essential for unfolding of protein substrates subsequently hydrolyzed by HslV. HslU recognizes the N-terminal part of its protein substrates and unfolds these before they are guided to HslV for hydrolysis. This chain is ATP-dependent protease ATPase subunit HslU, found in Ralstonia pickettii (strain 12J).